The primary structure comprises 125 residues: NADPH-dependent 7-cyano-7-deazaguanine reductase (125 aa).

C41 (thioimide intermediate) is an active-site residue. D48 acts as the Proton donor in catalysis. Residues 63–65 (IEL) and 82–83 (HE) contribute to the substrate site.

Belongs to the GTP cyclohydrolase I family. QueF type 1 subfamily.

The protein localises to the cytoplasm. The catalysed reaction is 7-aminomethyl-7-carbaguanine + 2 NADP(+) = 7-cyano-7-deazaguanine + 2 NADPH + 3 H(+). Its pathway is tRNA modification; tRNA-queuosine biosynthesis. Catalyzes the NADPH-dependent reduction of 7-cyano-7-deazaguanine (preQ0) to 7-aminomethyl-7-deazaguanine (preQ1). The chain is NADPH-dependent 7-cyano-7-deazaguanine reductase from Sulfurovum sp. (strain NBC37-1).